The following is a 292-amino-acid chain: Putative OX-2 membrane glycoprotein homolog (292 aa).

Positions 1 to 18 (MSPLMLRLLPLLCIIISA) are cleaved as a signal peptide. In terms of domain architecture, Ig-like V-type spans 24–136 (PETSPSLVYE…TFTVDNEKTS (113 aa)). A disulfide bridge links C42 with C126. N-linked (GlcNAc...) asparagine; by host glycosylation is found at N45, N57, N72, and N195. The region spanning 147–237 (PIVVLYFRYL…TNQKASALVT (91 aa)) is the Ig-like C2-type domain. Residues 263-283 (VFTWIVPLILILIISVMVLLI) form a helical membrane-spanning segment.

It is found in the host membrane. In Human herpesvirus 6B (strain Z29) (HHV-6 variant B), this protein is Putative OX-2 membrane glycoprotein homolog (U85).